Consider the following 215-residue polypeptide: Urease accessory protein UreG (215 aa).

Position 11 to 18 (11 to 18) interacts with GTP; sequence GPVGAGKS.

Belongs to the SIMIBI class G3E GTPase family. UreG subfamily. As to quaternary structure, homodimer. UreD, UreF and UreG form a complex that acts as a GTP-hydrolysis-dependent molecular chaperone, activating the urease apoprotein by helping to assemble the nickel containing metallocenter of UreC. The UreE protein probably delivers the nickel.

It localises to the cytoplasm. Facilitates the functional incorporation of the urease nickel metallocenter. This process requires GTP hydrolysis, probably effectuated by UreG. The chain is Urease accessory protein UreG from Cenarchaeum symbiosum (strain A).